A 360-amino-acid chain; its full sequence is Heat-inducible transcription repressor HrcA (360 aa).

It belongs to the HrcA family.

Negative regulator of class I heat shock genes (grpE-dnaK-dnaJ and groELS operons). Prevents heat-shock induction of these operons. The protein is Heat-inducible transcription repressor HrcA of Gloeobacter violaceus (strain ATCC 29082 / PCC 7421).